The chain runs to 191 residues: Fe/S biogenesis protein NfuA (191 aa).

Positions 149 and 152 each coordinate [4Fe-4S] cluster.

It belongs to the NfuA family. Homodimer. [4Fe-4S] cluster is required as a cofactor.

Functionally, involved in iron-sulfur cluster biogenesis. Binds a 4Fe-4S cluster, can transfer this cluster to apoproteins, and thereby intervenes in the maturation of Fe/S proteins. Could also act as a scaffold/chaperone for damaged Fe/S proteins. This chain is Fe/S biogenesis protein NfuA, found in Escherichia coli O139:H28 (strain E24377A / ETEC).